Reading from the N-terminus, the 294-residue chain is Cytidine deaminase (294 aa).

2 consecutive CMP/dCMP-type deaminase domains span residues 48–168 (DEDA…FGPK) and 186–294 (VSGD…VLLG). A substrate-binding site is contributed by 89-91 (NME). Zn(2+) is bound at residue H102. E104 functions as the Proton donor in the catalytic mechanism. Zn(2+) is bound by residues C129 and C132.

The protein belongs to the cytidine and deoxycytidylate deaminase family. As to quaternary structure, homodimer. Requires Zn(2+) as cofactor.

The catalysed reaction is cytidine + H2O + H(+) = uridine + NH4(+). It catalyses the reaction 2'-deoxycytidine + H2O + H(+) = 2'-deoxyuridine + NH4(+). Its function is as follows. This enzyme scavenges exogenous and endogenous cytidine and 2'-deoxycytidine for UMP synthesis. The polypeptide is Cytidine deaminase (Klebsiella pneumoniae subsp. pneumoniae (strain ATCC 700721 / MGH 78578)).